A 241-amino-acid polypeptide reads, in one-letter code: Large ribosomal subunit protein uL30 (241 aa).

The segment at 1 to 32 (MATTLKPETLQKKEKAQQKTAEERAAAKKVRK) is disordered. Over residues 9–26 (TLQKKEKAQQKTAEERAA) the composition is skewed to basic and acidic residues.

Belongs to the universal ribosomal protein uL30 family. In terms of assembly, component of the large ribosomal subunit. Mature ribosomes consist of a small (40S) and a large (60S) subunit. The 40S subunit contains about 32 different proteins and 1 molecule of RNA (18S). The 60S subunit contains 45 different proteins and 3 molecules of RNA (25S, 5.8S and 5S).

It is found in the cytoplasm. Functionally, component of the ribosome, a large ribonucleoprotein complex responsible for the synthesis of proteins in the cell. The small ribosomal subunit (SSU) binds messenger RNAs (mRNAs) and translates the encoded message by selecting cognate aminoacyl-transfer RNA (tRNA) molecules. The large subunit (LSU) contains the ribosomal catalytic site termed the peptidyl transferase center (PTC), which catalyzes the formation of peptide bonds, thereby polymerizing the amino acids delivered by tRNAs into a polypeptide chain. The nascent polypeptides leave the ribosome through a tunnel in the LSU and interact with protein factors that function in enzymatic processing, targeting, and the membrane insertion of nascent chains at the exit of the ribosomal tunnel. The protein is Large ribosomal subunit protein uL30 of Candida albicans (strain SC5314 / ATCC MYA-2876) (Yeast).